The following is a 336-amino-acid chain: Torsin-1B (336 aa).

Residues 1-24 form the signal peptide; the sequence is MLRAGWLRGAAALALLLAARVVAA. Residue asparagine 64 is glycosylated (N-linked (GlcNAc...) asparagine). 109-116 provides a ligand contact to ATP; sequence GWAGTGKN. A glycan (N-linked (GlcNAc...) asparagine) is linked at asparagine 165.

This sequence belongs to the ClpA/ClpB family. Torsin subfamily. In terms of assembly, homohexamer. Interacts with TOR1A; the interaction may be specific of neural tissues. Interacts with TOR1AIP1; TOR1AIP1 is required for TOR1B location on the nuclear membrane. Interacts (ATP-bound) with TOR1AIP2; important for endoplasmic reticulum integrity. N-glycosylated. As to expression, widely expressed with low levels in brain.

The protein resides in the endoplasmic reticulum lumen. It localises to the nucleus membrane. It catalyses the reaction ATP + H2O = ADP + phosphate + H(+). In terms of biological role, may serve as a molecular chaperone assisting in the proper folding of secreted and/or membrane proteins. Plays a role in non-neural cells nuclear envelope and endoplasmic reticulum integrity. May have a redundant function with TOR1A in non-neural tissues. This is Torsin-1B (TOR1B) from Homo sapiens (Human).